Here is a 426-residue protein sequence, read N- to C-terminus: Enolase 1 (426 aa).

Residue Q162 coordinates (2R)-2-phosphoglycerate. Catalysis depends on E204, which acts as the Proton donor. Residues D241, E284, and D311 each contribute to the Mg(2+) site. The (2R)-2-phosphoglycerate site is built by K336, R365, S366, and K387. K336 serves as the catalytic Proton acceptor.

The protein belongs to the enolase family. It depends on Mg(2+) as a cofactor.

It localises to the cytoplasm. The protein localises to the secreted. It is found in the cell surface. It catalyses the reaction (2R)-2-phosphoglycerate = phosphoenolpyruvate + H2O. It functions in the pathway carbohydrate degradation; glycolysis; pyruvate from D-glyceraldehyde 3-phosphate: step 4/5. Functionally, catalyzes the reversible conversion of 2-phosphoglycerate (2-PG) into phosphoenolpyruvate (PEP). It is essential for the degradation of carbohydrates via glycolysis. The polypeptide is Enolase 1 (Methanospirillum hungatei JF-1 (strain ATCC 27890 / DSM 864 / NBRC 100397 / JF-1)).